A 149-amino-acid chain; its full sequence is Large ribosomal subunit protein bL9 (149 aa).

It belongs to the bacterial ribosomal protein bL9 family.

Functionally, binds to the 23S rRNA. The polypeptide is Large ribosomal subunit protein bL9 (Acidothermus cellulolyticus (strain ATCC 43068 / DSM 8971 / 11B)).